Consider the following 134-residue polypeptide: Secretin (134 aa).

An N-terminal signal peptide occupies residues 1–21 (MATRALLLLLLLPPLLLLAGC). The propeptide occupies 22 to 31 (AARPAPPRAP). Residue Val-59 is modified to Valine amide. Ser-63 bears the Phosphoserine mark. A propeptide spanning residues 63–134 (SQQDPENNTA…PAAEGSPMPP (72 aa)) is cleaved from the precursor.

This sequence belongs to the glucagon family.

Its subcellular location is the secreted. In terms of biological role, hormone involved in different processes, such as regulation of the pH of the duodenal content, food intake and water homeostasis. Exerts its biological effects by binding to secretin receptor (SCTR), a G-protein coupled receptor expressed in the basolateral domain of several cells. Acts as a key gastrointestinal hormone by regulating the pH of the duodenal content. Secreted by S cells of the duodenum in the crypts of Lieberkuehn and regulates the pH of the duodenum by (1) inhibiting the secretion of gastric acid from the parietal cells of the stomach and (2) stimulating the production of bicarbonate (NaHCO(3)) from the ductal cells of the pancreas. Production of bicarbonate is essential to neutralize the pH and ensure no damage is done to the small intestine by the gastric acid. In addition to regulating the pH of the duodenal content, plays a central role in diet induced thermogenesis: acts as a non-sympathetic brown fat (BAT) activator mediating prandial thermogenesis, which consequentially induces satiation. Mechanistically, secretin released by the gut after a meal binds to secretin receptor (SCTR) in brown adipocytes, activating brown fat thermogenesis by stimulating lipolysis, which is sensed in the brain and promotes satiation. Also able to stimulate lipolysis in white adipocytes. Also plays an important role in cellular osmoregulation: released into the systemic circulation in response to hyperosmolality and acts at different levels in the hypothalamus, pituitary and kidney to regulate water homeostasis. Also plays a role in the central nervous system, possibly by acting as a neuropeptide hormone: required for hippocampal synaptic function and neural progenitor cells maintenance. The chain is Secretin from Sus scrofa (Pig).